The sequence spans 106 residues: ATP-dependent Clp protease adapter protein ClpS (106 aa).

The segment covering 1 to 13 has biased composition (basic and acidic residues); sequence MPRNTSHEHDHGL. Residues 1-20 are disordered; the sequence is MPRNTSHEHDHGLMVEASKP.

It belongs to the ClpS family. In terms of assembly, binds to the N-terminal domain of the chaperone ClpA.

In terms of biological role, involved in the modulation of the specificity of the ClpAP-mediated ATP-dependent protein degradation. This chain is ATP-dependent Clp protease adapter protein ClpS, found in Xanthomonas axonopodis pv. citri (strain 306).